The following is a 145-amino-acid chain: Superoxide dismutase [Cu-Zn] (145 aa).

The Cu cation site is built by His37, His39, and His54. A disulfide bridge links Cys48 with Cys137. Positions 54, 62, 71, and 74 each coordinate Zn(2+). His111 provides a ligand contact to Cu cation.

It belongs to the Cu-Zn superoxide dismutase family. In terms of assembly, homodimer. Cu cation is required as a cofactor. The cofactor is Zn(2+).

It localises to the cytoplasm. The enzyme catalyses 2 superoxide + 2 H(+) = H2O2 + O2. Destroys radicals which are normally produced within the cells and which are toxic to biological systems. This Drosophila busckii (Fruit fly) protein is Superoxide dismutase [Cu-Zn].